We begin with the raw amino-acid sequence, 416 residues long: Orexin/Hypocretin receptor type 1 (416 aa).

The segment at 1–22 (MEPSATPGAQPGVPTSSGEPFH) is disordered. The Extracellular portion of the chain corresponds to 1 to 46 (MEPSATPGAQPGVPTSSGEPFHLPPDYEDEFLRYLWRDYLYPKQYE). The segment at 26-41 (DYEDEFLRYLWRDYLY) is required for response to orexin-A. The chain crosses the membrane as a helical span at residues 47-67 (WVLIAAYVAVFLIALVGNTLV). At 68-82 (CLAVWRNHHMRTVTN) the chain is on the cytoplasmic side. A helical transmembrane segment spans residues 83–105 (YFIVNLSLADVLVTAICLPASLL). Over 106-119 (VDITESWLFGHALC) the chain is Extracellular. A disulfide bridge connects residues Cys119 and Cys202. Residues 120 to 140 (KVIPYLQAVSVSVAVLTLSFI) form a helical membrane-spanning segment. At 141–160 (ALDRWYAICHPLLFKSTARR) the chain is on the cytoplasmic side. A helical transmembrane segment spans residues 161–182 (ARGSILGIWAVSLAVMVPQAAV). The Extracellular segment spans residues 183–213 (MECSSVLPELANRTRLFSVCDERWADELYPK). The N-linked (GlcNAc...) asparagine glycan is linked to Asn194. The helical transmembrane segment at 214 to 235 (IYHSCFFFVTYLAPLGLMGMAY) threads the bilayer. The Cytoplasmic segment spans residues 236-298 (FQIFRKLWGP…QMRARRKTAK (63 aa)). The helical transmembrane segment at 299–321 (MLMVVLLVFALCYLPISVLNVLK) threads the bilayer. Topologically, residues 322 to 336 (RVFGMFRQASDREAV) are extracellular. Residues 337 to 360 (YACFTFSHWLVYANSAANPIIYNF) traverse the membrane as a helical segment. At 361-416 (LSGKFREQFKAAFSCCLPGLGPSSSARHKSLSLQSRCSVSKVSEHVVLTTVTTVLS) the chain is on the cytoplasmic side.

Belongs to the G-protein coupled receptor 1 family. In terms of tissue distribution, highly expressed in the brain in the prefrontal cortex, hippocampus, paraventricular thalamus, ventromedial hypothalamus, arcuate nucleus, dorsal raphe nucleus, and locus coeruleus. Not detected in the spleen, lung, liver, skeletal muscle, kidney and testis. Orexin receptor mRNA expression has also been reported in the adrenal gland, enteric nervous system, and pancreas.

The protein resides in the cell membrane. Functionally, moderately selective excitatory receptor for orexin-A and, with a lower affinity, for orexin-B neuropeptide. Triggers an increase in cytoplasmic Ca(2+) levels in response to orexin-A binding. The protein is Orexin/Hypocretin receptor type 1 of Rattus norvegicus (Rat).